Here is a 154-residue protein sequence, read N- to C-terminus: Small ribosomal subunit protein uS13 (154 aa).

This sequence belongs to the universal ribosomal protein uS13 family.

The protein localises to the cytoplasm. In terms of biological role, located at the top of the head of the 40S subunit, it contacts several helices of the 18S rRNA. This chain is Small ribosomal subunit protein uS13 (rps18), found in Dictyostelium discoideum (Social amoeba).